Reading from the N-terminus, the 141-residue chain is Large ribosomal subunit protein uL11 (141 aa).

This sequence belongs to the universal ribosomal protein uL11 family. As to quaternary structure, part of the ribosomal stalk of the 50S ribosomal subunit. Interacts with L10 and the large rRNA to form the base of the stalk. L10 forms an elongated spine to which L12 dimers bind in a sequential fashion forming a multimeric L10(L12)X complex. In terms of processing, one or more lysine residues are methylated.

In terms of biological role, forms part of the ribosomal stalk which helps the ribosome interact with GTP-bound translation factors. This Prosthecochloris aestuarii (strain DSM 271 / SK 413) protein is Large ribosomal subunit protein uL11.